The primary structure comprises 800 residues: Receptor-like protein 47 (800 aa).

The first 31 residues, 1-31, serve as a signal peptide directing secretion; that stretch reads MMHSSSVRRMITVKWSLCLIFCLTNSILVSA. Over 32 to 759 the chain is Extracellular; that stretch reads KHLCLPDQKD…QDEDKEEEDQ (728 aa). Asparagine 66 and asparagine 102 each carry an N-linked (GlcNAc...) asparagine glycan. 23 LRR repeats span residues 109–131, 133–156, 157–179, 190–213, 214–238, 240–262, 263–288, 294–311, 312–334, 335–358, 360–383, 385–406, 407–430, 431–453, 455–477, 479–500, 502–523, 524–550, 551–574, 621–645, 646–669, 670–693, and 695–718; these read QHLQ…SIGN, KRLK…LGNL, SYLT…SMGN, LSSV…NMSS, LSKL…LFMI, SLIL…NISS, PSNL…IFSP, YLDV…VSLP, SPIE…LRNQ, TSLE…LWSL, ELRY…VIQG, RELL…LLPV, VSMN…ICEL, DNLR…CFEN, HLYV…AISH, LQSF…LINC, DIEF…WLEL, LPNL…SLSF, SRLR…YFVG, FTIY…IGLL, KEVI…LSNL, SNLQ…LGKL, and FLEW…QIQT. A glycan (N-linked (GlcNAc...) asparagine) is linked at asparagine 155. N-linked (GlcNAc...) asparagine glycosylation is present at asparagine 210. The N-linked (GlcNAc...) asparagine glycan is linked to asparagine 259. Asparagine 323 and asparagine 333 each carry an N-linked (GlcNAc...) asparagine glycan. A glycan (N-linked (GlcNAc...) asparagine) is linked at asparagine 365. N-linked (GlcNAc...) asparagine glycans are attached at residues asparagine 442, asparagine 465, asparagine 499, and asparagine 514. N-linked (GlcNAc...) asparagine glycosylation occurs at asparagine 668. N-linked (GlcNAc...) asparagine glycosylation occurs at asparagine 700. The helical transmembrane segment at 760 to 780 threads the bilayer; the sequence is VFSWIAAAIGYVPGVVCGLTI. Topologically, residues 781 to 800 are cytoplasmic; sequence GHILVSHKRDWFMRIVSFFT.

This sequence belongs to the RLP family.

The protein localises to the cell membrane. The sequence is that of Receptor-like protein 47 from Arabidopsis thaliana (Mouse-ear cress).